The following is a 517-amino-acid chain: Crotonobetaine/carnitine--CoA ligase (517 aa).

It belongs to the ATP-dependent AMP-binding enzyme family.

The catalysed reaction is 4-(trimethylamino)butanoate + ATP + CoA = 4-(trimethylamino)butanoyl-CoA + AMP + diphosphate. It catalyses the reaction crotonobetaine + ATP + CoA = crotonobetainyl-CoA + AMP + diphosphate. It carries out the reaction (R)-carnitine + ATP + CoA = (R)-carnitinyl-CoA + AMP + diphosphate. Its pathway is amine and polyamine metabolism; carnitine metabolism. Catalyzes the transfer of CoA to carnitine, generating the initial carnitinyl-CoA needed for the CaiB reaction cycle. Also has activity toward crotonobetaine and gamma-butyrobetaine. This Escherichia coli O7:K1 (strain IAI39 / ExPEC) protein is Crotonobetaine/carnitine--CoA ligase.